A 123-amino-acid chain; its full sequence is Probable prefoldin subunit 4 (123 aa).

It belongs to the prefoldin subunit beta family. In terms of assembly, heterohexamer of two PFD-alpha type and four PFD-beta type subunits.

Its function is as follows. Binds specifically to cytosolic chaperonin (c-CPN) and transfers target proteins to it. Binds to nascent polypeptide chain and promotes folding in an environment in which there are many competing pathways for nonnative proteins. The protein is Probable prefoldin subunit 4 of Schizosaccharomyces pombe (strain 972 / ATCC 24843) (Fission yeast).